Here is a 372-residue protein sequence, read N- to C-terminus: N-methyl-L-tryptophan oxidase (372 aa).

Aspartate 4–histidine 34 lines the FAD pocket. Cysteine 308 is modified (S-8alpha-FAD cysteine).

It belongs to the MSOX/MTOX family. MTOX subfamily. Monomer. FAD serves as cofactor.

The catalysed reaction is N(alpha)-methyl-L-tryptophan + O2 + H2O = L-tryptophan + formaldehyde + H2O2. Functionally, catalyzes the oxidative demethylation of N-methyl-L-tryptophan. In Escherichia coli O17:K52:H18 (strain UMN026 / ExPEC), this protein is N-methyl-L-tryptophan oxidase.